The following is a 242-amino-acid chain: Small ribosomal subunit protein uS2 (242 aa).

The protein belongs to the universal ribosomal protein uS2 family.

In Shewanella amazonensis (strain ATCC BAA-1098 / SB2B), this protein is Small ribosomal subunit protein uS2.